Consider the following 1630-residue polypeptide: Probable phosphoinositide phosphatase SAC9 (1630 aa).

The 381-residue stretch at 147–527 folds into the SAC domain; that stretch reads LTELDIDGKH…ADAVTGKSYY (381 aa). Positions 456-467 match the Phosphatase catalytic core; degenerate motif; it reads RFNCADSLDRTN. The WW domain maps to 508–542; the sequence is APLPPGWEKRADAVTGKSYYIDHNTKTTTWSHPCP.

In terms of tissue distribution, ubiquitous. Most abundant in the roots with lower expression levels throughout the leaves and shoot.

Its function is as follows. Probable phosphoinositide phosphatase that could be involved in stress signaling. This chain is Probable phosphoinositide phosphatase SAC9 (SAC9), found in Arabidopsis thaliana (Mouse-ear cress).